A 757-amino-acid polypeptide reads, in one-letter code: 5-methyltetrahydropteroyltriglutamate--homocysteine methyltransferase (757 aa).

5-methyltetrahydropteroyltri-L-glutamate contacts are provided by residues 16-19 (RELK) and K112. Residues 433–435 (IGS) and E486 contribute to the L-homocysteine site. L-methionine is bound by residues 433 to 435 (IGS) and E486. Residues 517–518 (RC) and W563 contribute to the 5-methyltetrahydropteroyltri-L-glutamate site. D601 contacts L-homocysteine. D601 contacts L-methionine. E607 is a 5-methyltetrahydropteroyltri-L-glutamate binding site. The Zn(2+) site is built by H643, C645, and E667. H696 functions as the Proton donor in the catalytic mechanism. C728 is a binding site for Zn(2+).

This sequence belongs to the vitamin-B12 independent methionine synthase family. Requires Zn(2+) as cofactor.

It carries out the reaction 5-methyltetrahydropteroyltri-L-glutamate + L-homocysteine = tetrahydropteroyltri-L-glutamate + L-methionine. It functions in the pathway amino-acid biosynthesis; L-methionine biosynthesis via de novo pathway; L-methionine from L-homocysteine (MetE route): step 1/1. Its function is as follows. Catalyzes the transfer of a methyl group from 5-methyltetrahydrofolate to homocysteine resulting in methionine formation. This chain is 5-methyltetrahydropteroyltriglutamate--homocysteine methyltransferase, found in Pasteurella multocida (strain Pm70).